The following is a 156-amino-acid chain: Aspartate carbamoyltransferase regulatory chain (156 aa).

4 residues coordinate Zn(2+): C109, C114, C140, and C143.

It belongs to the PyrI family. Contains catalytic and regulatory chains. Zn(2+) is required as a cofactor.

Functionally, involved in allosteric regulation of aspartate carbamoyltransferase. The chain is Aspartate carbamoyltransferase regulatory chain from Methanosarcina barkeri (strain Fusaro / DSM 804).